The primary structure comprises 378 residues: 4-hydroxy-3-methylbut-2-en-1-yl diphosphate synthase (flavodoxin) (378 aa).

[4Fe-4S] cluster is bound by residues cysteine 268, cysteine 271, cysteine 303, and glutamate 310.

The protein belongs to the IspG family. [4Fe-4S] cluster serves as cofactor.

The catalysed reaction is (2E)-4-hydroxy-3-methylbut-2-enyl diphosphate + oxidized [flavodoxin] + H2O + 2 H(+) = 2-C-methyl-D-erythritol 2,4-cyclic diphosphate + reduced [flavodoxin]. Its pathway is isoprenoid biosynthesis; isopentenyl diphosphate biosynthesis via DXP pathway; isopentenyl diphosphate from 1-deoxy-D-xylulose 5-phosphate: step 5/6. Its function is as follows. Converts 2C-methyl-D-erythritol 2,4-cyclodiphosphate (ME-2,4cPP) into 1-hydroxy-2-methyl-2-(E)-butenyl 4-diphosphate. In Corynebacterium efficiens (strain DSM 44549 / YS-314 / AJ 12310 / JCM 11189 / NBRC 100395), this protein is 4-hydroxy-3-methylbut-2-en-1-yl diphosphate synthase (flavodoxin).